The following is a 66-amino-acid chain: Beta-defensin 13 (66 aa).

A signal peptide spans 1–22 (MRIFSLIVAGLVLLIQLHPAKG). Disulfide bonds link Cys-30–Cys-59, Cys-37–Cys-51, and Cys-41–Cys-60.

Belongs to the beta-defensin family.

Its subcellular location is the secreted. Its function is as follows. Has antibacterial activity. The protein is Beta-defensin 13 (Defb13) of Rattus norvegicus (Rat).